Consider the following 137-residue polypeptide: Competence protein ComGG (137 aa).

The helical transmembrane segment at 10-30 (GVLLYAVTIAAIFSLLLQFYL) threads the bilayer. A disordered region spans residues 106–137 (EKRDKKEEVATDSSEKVEKKKSEEKPEKKENS).

In terms of assembly, the transformation pili are flexible filaments, consisting mainly of the major pilin ComGC and smaller amounts of the minor pilins, including at least ComGD, ComGF and ComGG, and perhaps ComGE. Interacts with ComGC; the interaction is probably direct. Interacts with ComGD. Interacts with ComGE. Interacts with ComGF. May act as a link between ComGC, ComGD and ComGF.

Its subcellular location is the fimbrium. The protein resides in the cell membrane. Its function is as follows. Required for formation of the type IV-like pilus (T4P) that plays a role in transformation. Transformation pili are dynamically extended and retracted, perhaps thereby promoting DNA uptake and transformation. Required for transformation. This Streptococcus pneumoniae (strain ATCC BAA-255 / R6) protein is Competence protein ComGG.